Here is a 464-residue protein sequence, read N- to C-terminus: Soluble pyridine nucleotide transhydrogenase (464 aa).

35–44 (DSRRQVGGNC) contributes to the FAD binding site.

It belongs to the class-I pyridine nucleotide-disulfide oxidoreductase family. FAD serves as cofactor.

It localises to the cytoplasm. It catalyses the reaction NAD(+) + NADPH = NADH + NADP(+). Conversion of NADPH, generated by peripheral catabolic pathways, to NADH, which can enter the respiratory chain for energy generation. The protein is Soluble pyridine nucleotide transhydrogenase of Pseudomonas fluorescens (strain ATCC BAA-477 / NRRL B-23932 / Pf-5).